A 1407-amino-acid polypeptide reads, in one-letter code: Clustered mitochondria protein (1407 aa).

The segment covering 1–12 (MAGKSNKSKAKR) has biased composition (basic residues). 2 disordered regions span residues 1-36 (MAGK…PVAA) and 83-103 (IPKA…PKQG). A compositionally biased stretch (polar residues) spans 14–24 (AQSTTTNSTTD). The 287-residue stretch at 384–670 (PDHKRDAARA…RVTPRDANYT (287 aa)) folds into the Clu domain. Residues 724 to 760 (IDGEANGASNSDQKSISDKQNTTAEDYAAGSSESSKS) are disordered. Over residues 730–747 (GASNSDQKSISDKQNTTA) the composition is skewed to polar residues. 5 TPR repeats span residues 1025–1058 (AKDL…LQQV), 1067–1100 (ANCC…NERC), 1109–1142 (AHSY…LGLS), 1151–1184 (AATF…NERL), and 1193–1226 (AVCY…LVKQ). The segment at 1358–1407 (VSSEKGGENGEAKVQEKKESSENGKTENLAPAGLGAGLTSLDKKKQKAKK) is disordered. Over residues 1362–1382 (KGGENGEAKVQEKKESSENGK) the composition is skewed to basic and acidic residues.

This sequence belongs to the CLU family.

The protein localises to the cytoplasm. Its function is as follows. mRNA-binding protein involved in proper cytoplasmic distribution of mitochondria. Together with REC2, REC3 and FMT/CLU, contributes to the establishment of the cellular volume devoted to the chloroplast compartment. The protein is Clustered mitochondria protein of Arabidopsis thaliana (Mouse-ear cress).